The following is a 130-amino-acid chain: Small ribosomal subunit protein uS8 (130 aa).

The protein belongs to the universal ribosomal protein uS8 family. In terms of assembly, part of the 30S ribosomal subunit. Contacts proteins S5 and S12.

Its function is as follows. One of the primary rRNA binding proteins, it binds directly to 16S rRNA central domain where it helps coordinate assembly of the platform of the 30S subunit. The sequence is that of Small ribosomal subunit protein uS8 from Phytoplasma mali (strain AT).